A 62-amino-acid chain; its full sequence is GLAYATGLGYSAPLAYSGLYGGYGYGYPGYAGYYGYGGLGYRSLGYSGLGYSGLGYYGGYHY.

Its function is as follows. Component of the cuticle of migratory locust which contains more than 100 different structural proteins. The protein is Cuticle protein 6.4 of Locusta migratoria (Migratory locust).